Reading from the N-terminus, the 383-residue chain is Acetylornithine deacetylase (383 aa).

Residue histidine 80 participates in Zn(2+) binding. The active site involves aspartate 82. Zn(2+) is bound at residue aspartate 112. Residue glutamate 144 is part of the active site. Glutamate 145, glutamate 169, and histidine 355 together coordinate Zn(2+).

Belongs to the peptidase M20A family. ArgE subfamily. Homodimer. The cofactor is Zn(2+). Co(2+) is required as a cofactor. It depends on glutathione as a cofactor.

It localises to the cytoplasm. The enzyme catalyses N(2)-acetyl-L-ornithine + H2O = L-ornithine + acetate. Its pathway is amino-acid biosynthesis; L-arginine biosynthesis; L-ornithine from N(2)-acetyl-L-ornithine (linear): step 1/1. Catalyzes the hydrolysis of the amide bond of N(2)-acetylated L-amino acids. Cleaves the acetyl group from N-acetyl-L-ornithine to form L-ornithine, an intermediate in L-arginine biosynthesis pathway, and a branchpoint in the synthesis of polyamines. The protein is Acetylornithine deacetylase of Shigella flexneri.